Reading from the N-terminus, the 276-residue chain is 4-deoxy-L-threo-5-hexosulose-uronate ketol-isomerase (276 aa).

Zn(2+) is bound by residues H194, H196, E201, and H243.

It belongs to the KduI family. Zn(2+) is required as a cofactor.

The catalysed reaction is 5-dehydro-4-deoxy-D-glucuronate = 3-deoxy-D-glycero-2,5-hexodiulosonate. The protein operates within glycan metabolism; pectin degradation; 2-dehydro-3-deoxy-D-gluconate from pectin: step 4/5. In terms of biological role, catalyzes the isomerization of 5-dehydro-4-deoxy-D-glucuronate to 3-deoxy-D-glycero-2,5-hexodiulosonate. This is 4-deoxy-L-threo-5-hexosulose-uronate ketol-isomerase from Lachnoclostridium phytofermentans (strain ATCC 700394 / DSM 18823 / ISDg) (Clostridium phytofermentans).